The primary structure comprises 430 residues: Serine--tRNA ligase (430 aa).

237 to 239 (TAE) serves as a coordination point for L-serine. Position 268 to 270 (268 to 270 (RSE)) interacts with ATP. E291 lines the L-serine pocket. 355–358 (EISS) contributes to the ATP binding site. L-serine is bound at residue S391.

Belongs to the class-II aminoacyl-tRNA synthetase family. Type-1 seryl-tRNA synthetase subfamily. As to quaternary structure, homodimer. The tRNA molecule binds across the dimer.

The protein localises to the cytoplasm. It carries out the reaction tRNA(Ser) + L-serine + ATP = L-seryl-tRNA(Ser) + AMP + diphosphate + H(+). The catalysed reaction is tRNA(Sec) + L-serine + ATP = L-seryl-tRNA(Sec) + AMP + diphosphate + H(+). It functions in the pathway aminoacyl-tRNA biosynthesis; selenocysteinyl-tRNA(Sec) biosynthesis; L-seryl-tRNA(Sec) from L-serine and tRNA(Sec): step 1/1. In terms of biological role, catalyzes the attachment of serine to tRNA(Ser). Is also able to aminoacylate tRNA(Sec) with serine, to form the misacylated tRNA L-seryl-tRNA(Sec), which will be further converted into selenocysteinyl-tRNA(Sec). The protein is Serine--tRNA ligase of Salmonella schwarzengrund (strain CVM19633).